Here is a 137-residue protein sequence, read N- to C-terminus: Small ribosomal subunit protein uS9c (137 aa).

The protein belongs to the universal ribosomal protein uS9 family.

The protein localises to the plastid. It localises to the chloroplast. This Mesostigma viride (Green alga) protein is Small ribosomal subunit protein uS9c (rps9).